The chain runs to 860 residues: Mycobactin import ATP-binding/permease protein IrtA (860 aa).

Residues methionine 1–threonine 293 lie on the Cytoplasmic side of the membrane. The FAD-binding FR-type domain maps to alanine 15–glutamate 124. FAD is bound by residues arginine 70–threonine 73, aspartate 87–histidine 91, alanine 97–serine 98, and threonine 238–glycine 240. The interval alanine 242 to arginine 275 is disordered. A helical membrane pass occupies residues leucine 294–leucine 314. The ABC transmembrane type-1 domain maps to isoleucine 295–glycine 577. Over leucine 315–glycine 335 the chain is Periplasmic. A helical membrane pass occupies residues valine 336–leucine 356. At histidine 357–alanine 409 the chain is on the cytoplasmic side. A helical transmembrane segment spans residues isoleucine 410–valine 430. Topologically, residues aspartate 431 to arginine 433 are periplasmic. A helical transmembrane segment spans residues leucine 434–isoleucine 454. The Cytoplasmic segment spans residues glutamine 455–arginine 525. A helical membrane pass occupies residues proline 526 to methionine 546. The Periplasmic segment spans residues aspartate 547–aspartate 550. The chain crosses the membrane as a helical span at residues isoleucine 551 to glycine 571. Over leucine 572 to arginine 860 the chain is Cytoplasmic. In terms of domain architecture, ABC transporter spans valine 609–threonine 842. Glycine 642–serine 649 is a binding site for ATP.

It belongs to the ABC transporter superfamily. Siderophore-Fe(3+) uptake transporter (SIUT) (TC 3.A.1.21) family. In terms of assembly, forms a heterodimer with IrtB. The cofactor is FAD.

The protein localises to the cell inner membrane. Its function is as follows. Part of the ABC transporter complex IrtAB involved in the import of iron-bound mycobactin (Fe-MBT) and carboxymycobactin (Fe-cMBT). Has a preference for Fe-MBT over Fe-cMBT. Mycobactins are then reduced by the siderophore interaction domain to facilitate iron release in the bacterial cell. Transmembrane domains (TMD) form a pore in the membrane and the ATP-binding domain (NBD) is responsible for energy generation. In Mycolicibacterium smegmatis (strain ATCC 700084 / mc(2)155) (Mycobacterium smegmatis), this protein is Mycobactin import ATP-binding/permease protein IrtA.